Consider the following 475-residue polypeptide: Cytochrome c-552 (475 aa).

Positions 1–29 are cleaved as a signal peptide; the sequence is MSIKHWMSAPIAVATLFASQLLLAGSVLA. The tract at residues 38 to 57 is disordered; it reads PRNDAFEQKHPDQYHSWKAT. Position 92 (His92) interacts with heme c. Residues Cys120, Cys123, and Lys124 each coordinate heme. Residues Cys158, Cys161, His162, Cys207, Cys210, and His211 each contribute to the heme c site. Ca(2+) is bound by residues Glu213, Tyr214, Lys259, and Gln261. Tyr214 provides a ligand contact to substrate. His262 contacts substrate. Residues His273, Cys280, Cys283, His284, His299, Cys312, Cys315, His316, and His391 each contribute to the heme c site.

Belongs to the cytochrome c-552 family. Ca(2+) serves as cofactor. It depends on heme c as a cofactor.

It localises to the periplasm. The enzyme catalyses 6 Fe(III)-[cytochrome c] + NH4(+) + 2 H2O = 6 Fe(II)-[cytochrome c] + nitrite + 8 H(+). The protein operates within nitrogen metabolism; nitrate reduction (assimilation). Its function is as follows. Catalyzes the reduction of nitrite to ammonia, consuming six electrons in the process. This chain is Cytochrome c-552, found in Vibrio parahaemolyticus serotype O3:K6 (strain RIMD 2210633).